The primary structure comprises 396 residues: MSEFIAENRGANAITRPNWSAVFSVAFCVACLIIVEFLPVSLLTPMAQDLGISEGVAGQSVTVTAFVAMFASLFITQTIQATDRRYVVILFAVLLTLSCLLVSFANSFSLLLIGRACLGLALGGFWAMSASLTMRLVPPRTVPKALSVIFGAVSIALVIAAPLGSFLGELIGWRNVFNAAAAMGVLCIFWIIKSLPSLPGEPSHQKQNTFRLLQRPGVMAGMIAIFMSFAGQFAFFTYIRPVYMNLAGFGVDGLTLVLLSFGIASFVGTSLSSFILKRSVKLALAGAPFVLALSALVLTLWGSYKIVATGVAIIWGLTFALIPVGWSTWITRSLADQAEKAGSIQVAVIQLANTCGAAIGGYALDNIGLTSPLMLSGTLMLLTALLVTAKVKMKKS.

Topologically, residues 1-21 (MSEFIAENRGANAITRPNWSA) are cytoplasmic. Residues 22–42 (VFSVAFCVACLIIVEFLPVSL) form a helical membrane-spanning segment. The Periplasmic segment spans residues 43 to 54 (LTPMAQDLGISE). A helical transmembrane segment spans residues 55–75 (GVAGQSVTVTAFVAMFASLFI). Topologically, residues 76–85 (TQTIQATDRR) are cytoplasmic. Residues 86 to 106 (YVVILFAVLLTLSCLLVSFAN) traverse the membrane as a helical segment. A topological domain (periplasmic) is located at residue serine 107. A helical transmembrane segment spans residues 108-128 (FSLLLIGRACLGLALGGFWAM). Topologically, residues 129–147 (SASLTMRLVPPRTVPKALS) are cytoplasmic. Residues 148 to 168 (VIFGAVSIALVIAAPLGSFLG) form a helical membrane-spanning segment. Residues 169–175 (ELIGWRN) are Periplasmic-facing. A helical transmembrane segment spans residues 176–196 (VFNAAAAMGVLCIFWIIKSLP). Residues 197–215 (SLPGEPSHQKQNTFRLLQR) lie on the Cytoplasmic side of the membrane. The helical transmembrane segment at 216–236 (PGVMAGMIAIFMSFAGQFAFF) threads the bilayer. Residues 237–255 (TYIRPVYMNLAGFGVDGLT) are Periplasmic-facing. A helical transmembrane segment spans residues 256-276 (LVLLSFGIASFVGTSLSSFIL). At 277 to 281 (KRSVK) the chain is on the cytoplasmic side. The chain crosses the membrane as a helical span at residues 282–302 (LALAGAPFVLALSALVLTLWG). At 303–305 (SYK) the chain is on the periplasmic side. A helical membrane pass occupies residues 306-326 (IVATGVAIIWGLTFALIPVGW). Topologically, residues 327 to 343 (STWITRSLADQAEKAGS) are cytoplasmic. The helical transmembrane segment at 344-364 (IQVAVIQLANTCGAAIGGYAL) threads the bilayer. The Periplasmic portion of the chain corresponds to 365 to 366 (DN). A helical membrane pass occupies residues 367 to 387 (IGLTSPLMLSGTLMLLTALLV). Over 388 to 396 (TAKVKMKKS) the chain is Cytoplasmic.

The protein belongs to the major facilitator superfamily. DHA1 family. NepI (TC 2.A.1.2.26) subfamily.

It is found in the cell inner membrane. The catalysed reaction is inosine(in) + H(+)(out) = inosine(out) + H(+)(in). It carries out the reaction guanosine(in) + H(+)(out) = guanosine(out) + H(+)(in). Its function is as follows. Involved in the efflux of purine ribonucleosides, such as inosine and guanosine. This Escherichia coli O6:H1 (strain CFT073 / ATCC 700928 / UPEC) protein is Purine ribonucleoside efflux pump NepI.